Here is a 205-residue protein sequence, read N- to C-terminus: SCO2-like protein RF_0960 (205 aa).

Residues Cys82, Cys86, and His172 each contribute to the Cu cation site.

Belongs to the SCO1/2 family.

This chain is SCO2-like protein RF_0960, found in Rickettsia felis (strain ATCC VR-1525 / URRWXCal2) (Rickettsia azadi).